Reading from the N-terminus, the 419-residue chain is Serine hydroxymethyltransferase (419 aa).

(6S)-5,6,7,8-tetrahydrofolate contacts are provided by residues L121 and 125 to 127 (GHL). K229 carries the N6-(pyridoxal phosphate)lysine modification. 354–356 (SPF) contributes to the (6S)-5,6,7,8-tetrahydrofolate binding site.

The protein belongs to the SHMT family. In terms of assembly, homodimer. It depends on pyridoxal 5'-phosphate as a cofactor.

The protein resides in the cytoplasm. The enzyme catalyses (6R)-5,10-methylene-5,6,7,8-tetrahydrofolate + glycine + H2O = (6S)-5,6,7,8-tetrahydrofolate + L-serine. It participates in one-carbon metabolism; tetrahydrofolate interconversion. It functions in the pathway amino-acid biosynthesis; glycine biosynthesis; glycine from L-serine: step 1/1. In terms of biological role, catalyzes the reversible interconversion of serine and glycine with tetrahydrofolate (THF) serving as the one-carbon carrier. This reaction serves as the major source of one-carbon groups required for the biosynthesis of purines, thymidylate, methionine, and other important biomolecules. Also exhibits THF-independent aldolase activity toward beta-hydroxyamino acids, producing glycine and aldehydes, via a retro-aldol mechanism. This is Serine hydroxymethyltransferase from Coxiella burnetii (strain CbuK_Q154) (Coxiella burnetii (strain Q154)).